The following is a 335-amino-acid chain: Anthranilate phosphoribosyltransferase (335 aa).

5-phospho-alpha-D-ribose 1-diphosphate contacts are provided by residues glycine 79, 82–83, serine 87, 89–92, 107–115, and serine 119; these read GD, NIST, and KHGNRSITS. Anthranilate is bound at residue glycine 79. Mg(2+) is bound at residue serine 91. Asparagine 110 serves as a coordination point for anthranilate. Arginine 165 lines the anthranilate pocket. 2 residues coordinate Mg(2+): aspartate 224 and glutamate 225.

This sequence belongs to the anthranilate phosphoribosyltransferase family. Homodimer. Mg(2+) is required as a cofactor.

The catalysed reaction is N-(5-phospho-beta-D-ribosyl)anthranilate + diphosphate = 5-phospho-alpha-D-ribose 1-diphosphate + anthranilate. The protein operates within amino-acid biosynthesis; L-tryptophan biosynthesis; L-tryptophan from chorismate: step 2/5. In terms of biological role, catalyzes the transfer of the phosphoribosyl group of 5-phosphorylribose-1-pyrophosphate (PRPP) to anthranilate to yield N-(5'-phosphoribosyl)-anthranilate (PRA). The sequence is that of Anthranilate phosphoribosyltransferase from Lactococcus lactis subsp. cremoris (strain SK11).